The chain runs to 738 residues: 1,4-alpha-glucan branching enzyme GlgB (738 aa).

Residue D399 is the Nucleophile of the active site. E452 serves as the catalytic Proton donor.

This sequence belongs to the glycosyl hydrolase 13 family. GlgB subfamily. As to quaternary structure, monomer.

The catalysed reaction is Transfers a segment of a (1-&gt;4)-alpha-D-glucan chain to a primary hydroxy group in a similar glucan chain.. Its pathway is glycan biosynthesis; glycogen biosynthesis. Functionally, catalyzes the formation of the alpha-1,6-glucosidic linkages in glycogen by scission of a 1,4-alpha-linked oligosaccharide from growing alpha-1,4-glucan chains and the subsequent attachment of the oligosaccharide to the alpha-1,6 position. The protein is 1,4-alpha-glucan branching enzyme GlgB of Chlamydia trachomatis serovar A (strain ATCC VR-571B / DSM 19440 / HAR-13).